The chain runs to 289 residues: Phospholipase A1 (289 aa).

The signal sequence occupies residues 1 to 20 (MRAILRGLLPATLLPLAAYA). Over 21–52 (QEATIKEVHDAPAVRGSIIANMLQEHDNPFTL) the chain is Periplasmic. Residues 53–65 (YPYDTNYLIYTNT) traverse the membrane as a beta stranded segment. At 66 to 84 (SDLNKEAISTYNWSENARK) the chain is on the extracellular side. Residues 85 to 99 (DEVKFQLSLAFPLWR) traverse the membrane as a beta stranded segment. Residues 100–105 (GILGPN) are Periplasmic-facing. Residues 106–118 (SVLGASYTQKSWW) traverse the membrane as a beta stranded segment. Residues 119-128 (QLSNSKESSP) lie on the Extracellular side of the membrane. Ser-126 is a Ca(2+) binding site. A beta stranded transmembrane segment spans residues 129-148 (FRETNYEPQLFLGFATDYRF). Residues 149–150 (AG) lie on the Periplasmic side of the membrane. A beta stranded membrane pass occupies residues 151–164 (WTLRDVEMGYNHDS). The active-site Proton acceptor is His-162. The Nucleophile role is filled by Ser-164. At 165-173 (NGRSDPTSR) the chain is on the extracellular side. Ca(2+) is bound by residues Arg-167 and Ser-172. A beta stranded membrane pass occupies residues 174–186 (SWNRLYTRLMAEN). The Periplasmic segment spans residues 187-188 (GN). Residues 189–198 (WLVEVKPWYV) traverse the membrane as a beta stranded segment. Topologically, residues 199–216 (IGSTDDNPDITKYMGYYQ) are extracellular. Asp-204 is a Ca(2+) binding site. Residues 217–223 (LKIGYHL) form a beta stranded membrane-spanning segment. Residues 224-225 (GE) lie on the Periplasmic side of the membrane. The beta stranded transmembrane segment at 226-234 (AVLSAKGQY) threads the bilayer. The Extracellular portion of the chain corresponds to 235–241 (NWNTGYG). A beta stranded transmembrane segment spans residues 242-250 (GAEVGLSYP). Topologically, residues 251–255 (VTKHV) are periplasmic. Residues 256–265 (RLYTQVYSGY) form a beta stranded membrane-spanning segment. Topologically, residues 266-274 (GESLIDYNF) are extracellular. Residues 275-286 (NQTRVGVGVMLN) traverse the membrane as a beta stranded segment. Residues 287 to 289 (DIF) are Periplasmic-facing.

It belongs to the phospholipase A1 family. Homodimer; dimerization is reversible, and the dimeric form is the active one. The cofactor is Ca(2+).

Its subcellular location is the cell outer membrane. The enzyme catalyses a 1,2-diacyl-sn-glycero-3-phosphocholine + H2O = a 2-acyl-sn-glycero-3-phosphocholine + a fatty acid + H(+). The catalysed reaction is a 1,2-diacyl-sn-glycero-3-phosphocholine + H2O = a 1-acyl-sn-glycero-3-phosphocholine + a fatty acid + H(+). Its function is as follows. Hydrolysis of phosphatidylcholine with phospholipase A2 (EC 3.1.1.4) and phospholipase A1 (EC 3.1.1.32) activities. This Salmonella typhi protein is Phospholipase A1 (pldA).